A 376-amino-acid polypeptide reads, in one-letter code: Erythronate-4-phosphate dehydrogenase (376 aa).

Substrate contacts are provided by S45 and T67. Residues D147, 209 to 211 (ASR), and D235 each bind NAD(+). R211 is an active-site residue. E240 is a catalytic residue. Catalysis depends on H257, which acts as the Proton donor. An NAD(+)-binding site is contributed by G260. Residue Y261 participates in substrate binding.

It belongs to the D-isomer specific 2-hydroxyacid dehydrogenase family. PdxB subfamily. As to quaternary structure, homodimer.

Its subcellular location is the cytoplasm. It catalyses the reaction 4-phospho-D-erythronate + NAD(+) = (R)-3-hydroxy-2-oxo-4-phosphooxybutanoate + NADH + H(+). The protein operates within cofactor biosynthesis; pyridoxine 5'-phosphate biosynthesis; pyridoxine 5'-phosphate from D-erythrose 4-phosphate: step 2/5. In terms of biological role, catalyzes the oxidation of erythronate-4-phosphate to 3-hydroxy-2-oxo-4-phosphonooxybutanoate. The protein is Erythronate-4-phosphate dehydrogenase of Aeromonas hydrophila subsp. hydrophila (strain ATCC 7966 / DSM 30187 / BCRC 13018 / CCUG 14551 / JCM 1027 / KCTC 2358 / NCIMB 9240 / NCTC 8049).